The following is a 447-amino-acid chain: Protein king tubby (447 aa).

Low complexity-rich tracts occupy residues 71-92 (GTGP…YSDS) and 157-169 (NNNN…NSSS). The interval 71–196 (GTGPNVTATS…GGAPDTEGDV (126 aa)) is disordered.

This sequence belongs to the TUB family.

The protein localises to the cytoplasm. Its subcellular location is the nucleus. The polypeptide is Protein king tubby (Anopheles gambiae (African malaria mosquito)).